A 266-amino-acid polypeptide reads, in one-letter code: UPF0328 protein ECU05_1610/ECU11_0120 (266 aa).

The protein belongs to the UPF0328 family.

In Encephalitozoon cuniculi (strain GB-M1) (Microsporidian parasite), this protein is UPF0328 protein ECU05_1610/ECU11_0120.